The following is a 151-amino-acid chain: Large ribosomal subunit protein uL22 (151 aa).

Polar residues predominate over residues 1–18 (MARINYSINADPENTSKA). Residues 1–23 (MARINYSINADPENTSKAMGSEL) are disordered.

This sequence belongs to the universal ribosomal protein uL22 family. Part of the 50S ribosomal subunit.

This protein binds specifically to 23S rRNA. It makes multiple contacts with different domains of the 23S rRNA in the assembled 50S subunit and ribosome. Functionally, the globular domain of the protein is located near the polypeptide exit tunnel on the outside of the subunit, while an extended beta-hairpin is found that lines the wall of the exit tunnel in the center of the 70S ribosome. In Methanosarcina mazei (strain ATCC BAA-159 / DSM 3647 / Goe1 / Go1 / JCM 11833 / OCM 88) (Methanosarcina frisia), this protein is Large ribosomal subunit protein uL22.